We begin with the raw amino-acid sequence, 122 residues long: Crustacean hyperglycemic hormones 5 (122 aa).

A signal peptide spans 1–26 (MSLGLIASRLVAVALVVVVACSTTWA). 3 disulfide bridges follow: Cys55–Cys91, Cys71–Cys87, and Cys74–Cys100. A Valine amide modification is found at Val120.

It belongs to the arthropod CHH/MIH/GIH/VIH hormone family.

It is found in the secreted. Hormone found in the sinus gland of isopods and decapods which controls the blood sugar level. Has a secretagogue action over the amylase released from the midgut gland. May act as a stress hormone and may be involved in the control of molting and reproduction. The chain is Crustacean hyperglycemic hormones 5 (CHH5) from Penaeus monodon (Giant tiger prawn).